Consider the following 1030-residue polypeptide: Kinesin-related protein 6 (1030 aa).

The SAM domain occupies 3-66 (FENDQLYNWL…FHLLQQLKKQ (64 aa)). 2 disordered regions span residues 66-164 (QTPP…SDFM) and 178-308 (RQQY…EDDD). Polar residues predominate over residues 68-80 (PPISNTSSPVINS). 4 stretches are compositionally biased toward low complexity: residues 81–117 (NNNN…NNNN), 125–164 (TSTS…SDFM), 181–197 (YAKQ…KYQS), and 225–238 (QQQQ…QQQD). The span at 239–290 (FEFEEEEEEEDQQQQYDEEEEEEEEYEEDFYKEDLGEIDDGNVLDISDDEPD) shows a compositional bias: acidic residues. In terms of domain architecture, Kinesin motor spans 453–775 (RIRVCVRKRP…LRYADRVKEL (323 aa)). Position 543-550 (543-550 (GQTGSGKT)) interacts with ATP. Composition is skewed to low complexity over residues 826–839 (INSQ…TSQP), 849–906 (QQQE…QTQP), and 981–1009 (PIQQ…QTPQ). 2 disordered regions span residues 826–915 (INSQ…KIDF) and 981–1030 (PIQQ…SSRN).

Belongs to the TRAFAC class myosin-kinesin ATPase superfamily. Kinesin family.

It is found in the cytoplasm. The protein resides in the cytoskeleton. In terms of biological role, microtubule-associated force-producing protein that plays a role in organelle transport. Its motor activity is directed toward the microtubule's plus end. The chain is Kinesin-related protein 6 (kif6) from Dictyostelium discoideum (Social amoeba).